Here is a 192-residue protein sequence, read N- to C-terminus: uncharacterized protein (192 aa).

Residues H29–S160 enclose the Nudix hydrolase domain. Residues G67–A89 carry the Nudix box motif. 2 residues coordinate Mg(2+): E83 and E87.

This sequence belongs to the Nudix hydrolase family. PCD1 subfamily. The cofactor is Mn(2+). Mg(2+) is required as a cofactor.

Functionally, probably mediates the hydrolysis of some nucleoside diphosphate derivatives. This is an uncharacterized protein from Escherichia fergusonii (strain ATCC 35469 / DSM 13698 / CCUG 18766 / IAM 14443 / JCM 21226 / LMG 7866 / NBRC 102419 / NCTC 12128 / CDC 0568-73).